The sequence spans 278 residues: Orotidine 5'-phosphate decarboxylase (278 aa).

Substrate contacts are provided by residues Asp40, 62–64 (KTH), 93–102 (DRKFADIGNT), Tyr223, and Arg242. The Proton donor role is filled by Lys95.

Belongs to the OMP decarboxylase family.

The enzyme catalyses orotidine 5'-phosphate + H(+) = UMP + CO2. The protein operates within pyrimidine metabolism; UMP biosynthesis via de novo pathway; UMP from orotate: step 2/2. This chain is Orotidine 5'-phosphate decarboxylase (URA1), found in Schizophyllum commune (Split gill fungus).